The following is a 459-amino-acid chain: Smoothelin-like protein 1 (459 aa).

A compositionally biased stretch (polar residues) spans 1–27; the sequence is MEQTEGNSSEDGTTVSPTAGNLETPGS. The interval 1–314 is disordered; it reads MEQTEGNSSE…RPRGPRAQNR (314 aa). Composition is skewed to basic and acidic residues over residues 42 to 55, 75 to 105, 112 to 168, 185 to 211, and 221 to 232; these read SDKE…EHLC, DELK…KEDT, DTGK…KEDA, ADVK…KELV, and EQGKENESEERA. The stretch at 124 to 154 forms a coiled coil; the sequence is NEVREKEEAMLASEKQKVDEKETNLESKEKS. Low complexity predominate over residues 260 to 283; the sequence is PESTGETSPSASESSPSEVPGSPT. The segment covering 287–300 has biased composition (basic and acidic residues); that stretch reads PSEKKKDRAPERRV. Phosphoserine; by PKA and PKG is present on serine 301. A Calponin-homology (CH) domain is found at 343–449; it reads GGVKNMLLEW…YIQELYRSLV (107 aa). The segment at 441–459 is calmodulin-binding; sequence IQELYRSLVQKGLVKTKKK.

The protein belongs to the smoothelin family. Interacts with PPP1R12A. Post-translationally, maximal phosphorylation of Ser-301 correlates with maximal relaxation of aorta in response to acetylcholine. As to expression, widely expressed, with highest expression in skeletal muscles (at protein level). Within striated muscles, significantly more expressed in soleus muscle compared with plantaris muscle or white vastus (at protein level). 30-40% lower expression in females than in males (at protein level). Expressed in type 2a fibers, but not detected in fast twitch type 2b muscle white vastus nor in oxidative type I/b heart muscle (at protein level). Expressed within myometrial cells of the uterus, as well as in the endometrial layer. In the aorta, confined to smooth muscle cells. Not detected in endothelial cells.

The protein localises to the cytoplasm. It localises to the myofibril. It is found in the sarcomere. Its subcellular location is the i band. The protein resides in the m line. The protein localises to the nucleus. In terms of biological role, plays a role in the regulation of contractile properties of both striated and smooth muscles. When unphosphorylated, may inhibit myosin dephosphorylation. Phosphorylation at Ser-301 reduces this inhibitory activity. The chain is Smoothelin-like protein 1 (Smtnl1) from Mus musculus (Mouse).